Reading from the N-terminus, the 332-residue chain is Formamidase (332 aa).

In terms of domain architecture, CN hydrolase spans Phe-14–Pro-259. The active-site Proton acceptor is the Glu-60. The active-site Proton donor is Lys-132. Catalysis depends on Cys-165, which acts as the Nucleophile.

Belongs to the carbon-nitrogen hydrolase superfamily. Aliphatic amidase family.

The enzyme catalyses formamide + H2O = formate + NH4(+). In terms of biological role, is an aliphatic amidase with a restricted substrate specificity, as it only hydrolyzes formamide. This Bacillus cereus (strain B4264) protein is Formamidase.